A 542-amino-acid polypeptide reads, in one-letter code: Sensor protein CitS (542 aa).

The Cytoplasmic portion of the chain corresponds to 1–13 (MVKKRFHFSLQTK). The helical transmembrane segment at 14 to 34 (IMGLIAALLVFVIGVLTITLA) threads the bilayer. Residues 35 to 175 (VQHTQGERRQ…TEQSIKKHLR (141 aa)) lie on the Extracellular side of the membrane. Residues 176 to 196 (NLSVIAVLVLLLGFIGAAVLA) traverse the membrane as a helical segment. The Cytoplasmic portion of the chain corresponds to 197–542 (KSIRKDTLGL…PFDSHRDCGG (346 aa)). The region spanning 216 to 279 (RERNAMLFAI…MSVLEKGEML (64 aa)) is the PAS domain. Positions 336-528 (AQTHEFSNKL…VFTVFIPKEK (193 aa)) constitute a Histidine kinase domain. Histidine 339 is modified (phosphohistidine; by autocatalysis).

It localises to the cell membrane. The catalysed reaction is ATP + protein L-histidine = ADP + protein N-phospho-L-histidine.. In terms of biological role, member of the two-component regulatory system CitT/CitS. Regulates the expression of the citM-yflN operon. Functions probably as a membrane-associated protein kinase that phosphorylates CitT in response to environmental citrate or Mg(2+)-citrate complex. This Bacillus subtilis (strain 168) protein is Sensor protein CitS (citS).